Consider the following 196-residue polypeptide: MILPIVGYGDPVLRKVGTAITPDYPNLKETIANMYETMYNAYGVGLAAPQVGLPIRIFVIDTTPFSDDEDLPADEQKDLKGFKRTFINAKIVKEEGEEWSFNEGCLSIPDVREDVYRKPTVTIEYCEEDFVMKTEVFDGLIARVIQHEYDHIEGVLFTDKISSLKKRLIQKKLKNITEGKTFQEYRMKFAAAKKGR.

Cys-105 and His-147 together coordinate Fe cation. Glu-148 is an active-site residue. Fe cation is bound at residue His-151.

This sequence belongs to the polypeptide deformylase family. Requires Fe(2+) as cofactor.

It catalyses the reaction N-terminal N-formyl-L-methionyl-[peptide] + H2O = N-terminal L-methionyl-[peptide] + formate. Functionally, removes the formyl group from the N-terminal Met of newly synthesized proteins. Requires at least a dipeptide for an efficient rate of reaction. N-terminal L-methionine is a prerequisite for activity but the enzyme has broad specificity at other positions. The chain is Peptide deformylase from Flavobacterium johnsoniae (strain ATCC 17061 / DSM 2064 / JCM 8514 / BCRC 14874 / CCUG 350202 / NBRC 14942 / NCIMB 11054 / UW101) (Cytophaga johnsonae).